Reading from the N-terminus, the 310-residue chain is HTH-type transcriptional activator TtdR (310 aa).

In terms of domain architecture, HTH lysR-type spans P6–T63. A DNA-binding region (H-T-H motif) is located at residues F23–Q42.

Belongs to the LysR transcriptional regulatory family.

Its function is as follows. Positive regulator required for L-tartrate-dependent anaerobic growth on glycerol. Induces expression of the ttdA-ttdB-ygjE operon. The sequence is that of HTH-type transcriptional activator TtdR (ttdR) from Escherichia coli (strain K12).